Consider the following 156-residue polypeptide: MQAILETVSNLLPYHLLSYGALLGTELFQSFVNTKICYQALPMKEFLALQKRVFPAYFRCQVGLVVLTAVTRPPYSILSFSQHIWDSVPLIAVGVTGALNCAMNEDNSSTTDPAKIQQANKTFSRNHAMSIHLNAIALVATVWYGFTLSSSLLNGL.

Residues asparagine 107 and asparagine 120 are each glycosylated (N-linked (GlcNAc...) asparagine). Residues 131-153 form a helical membrane-spanning segment; that stretch reads IHLNAIALVATVWYGFTLSSSLL.

It is found in the membrane. It functions in the pathway secondary metabolite biosynthesis. In terms of biological role, part of the gene cluster that mediates the biosynthesis of the isocyanide xanthocillin and its derivatives. The first step of the pathway consists in the conversion of tyrosine into a vinyl-isonitrile intermediate by the isocyanide synthase xanB. Subsequent oxidative dimerization of this intermediate to form xanthocillin may involve the cytochrome P450 monooxygenase xanG, whose expression is coregulated with that of XanB. Xanthocillin can be further modified by the isonitrile hydratase-like protein xanA which introduces N-formyl groups and the methyltransferase xanE which introduces methyl groups, leading to the production of several derivatives including fumiformamide. Finally, fumiformamide can be subject to both oxidative and reductive cyclization to yield melanocins E and F, respectively. This Aspergillus fumigatus (strain ATCC MYA-4609 / CBS 101355 / FGSC A1100 / Af293) (Neosartorya fumigata) protein is Xanthocillin biosynthesis cluster protein D.